The chain runs to 554 residues: Solute carrier family 22 member 2 (554 aa).

Residues 1–21 (MPTVDDILEQVGHFHFFQKQT) lie on the Cytoplasmic side of the membrane. The chain crosses the membrane as a helical span at residues 22–42 (FFLLALISAAFTPIYVGIVFL). The Extracellular segment spans residues 43 to 149 (GFTPDHRCRS…LVCARSWMLD (107 aa)). Residue Asn71 is glycosylated (N-linked (GlcNAc...) asparagine). The chain crosses the membrane as a helical span at residues 150–170 (LFQSAVNIGFFIGSVGIGYLA). Over 171 to 176 (DRFGRK) the chain is Cytoplasmic. The chain crosses the membrane as a helical span at residues 177–197 (LCLLVTILINAAAGVLMAVSP). Asn198 is a glycosylation site (N-linked (GlcNAc...) asparagine). Topologically, residues 198-209 (NYTWMLIFRLIQ) are extracellular. The chain crosses the membrane as a helical span at residues 210–230 (GLVSKAGWLIGYILITEFVGL). Topologically, residues 231–237 (NYRRTVG) are cytoplasmic. The chain crosses the membrane as a helical span at residues 238–258 (ILYQVAFTVGLLVLAGVAYAL). The Extracellular portion of the chain corresponds to 259 to 262 (PRWR). The chain crosses the membrane as a helical span at residues 263–283 (WLQLTVTLPYFCFLLYYWCIP). The short motif at 283–287 (PESPR) is the Proline-rich sequence element. Residues 284 to 348 (ESPRWLISQN…RTPQIRKHTC (65 aa)) lie on the Cytoplasmic side of the membrane. A helical membrane pass occupies residues 349–369 (ILMYNWFTSSVLYQGLIMHLG). Topologically, residues 370-374 (LAGGD) are extracellular. A helical transmembrane segment spans residues 375 to 395 (IYLDFFYSALVEFPAAFLIIA). The Cytoplasmic portion of the chain corresponds to 396-403 (TIDRVGRR). A helical transmembrane segment spans residues 404–424 (YPWAVSNMVAGAACLASVFVP). Residues 425 to 427 (DDL) lie on the Extracellular side of the membrane. A helical transmembrane segment spans residues 428–450 (QGLRITVACLGRMGITMAYEMVC). Over 451 to 463 (LVNAELYPTFIRN) the chain is Cytoplasmic. The chain crosses the membrane as a helical span at residues 464–484 (LGVLVCSSLCDVGGIVTPFLV). Over 485–493 (YRLTAIWLQ) the chain is Extracellular. A helical membrane pass occupies residues 494–514 (LPLVVFAVVGLVAGGLVLMLP). Residues 515–554 (ETKGRTLPETIEEAENLQRPRKNREKVIYVHVRKADGPLT) lie on the Cytoplasmic side of the membrane.

This sequence belongs to the major facilitator (TC 2.A.1) superfamily. Organic cation transporter (TC 2.A.1.19) family. Post-translationally, tyrosine phosphorylated. As to expression, expressed in kidney.

It localises to the basolateral cell membrane. The protein resides in the basal cell membrane. The enzyme catalyses (R)-noradrenaline(out) = (R)-noradrenaline(in). The catalysed reaction is (R)-adrenaline(out) = (R)-adrenaline(in). It carries out the reaction serotonin(out) = serotonin(in). It catalyses the reaction dopamine(out) = dopamine(in). The enzyme catalyses histamine(out) = histamine(in). The catalysed reaction is thiamine(in) = thiamine(out). It carries out the reaction creatinine(in) = creatinine(out). It catalyses the reaction 1-methylnicotinamide(out) = 1-methylnicotinamide(in). The enzyme catalyses guanidine(out) = guanidine(in). The catalysed reaction is choline(out) = choline(in). It carries out the reaction agmatine(out) = agmatine(in). It catalyses the reaction putrescine(out) = putrescine(in). The enzyme catalyses spermidine(in) = spermidine(out). The catalysed reaction is tyramine(in) = tyramine(out). It carries out the reaction L-histidyl-L-proline diketopiperazine(in) = L-histidyl-L-proline diketopiperazine(out). It catalyses the reaction (R)-salsolinol(in) = (R)-salsolinol(out). The enzyme catalyses N-methyl-(R)-salsolinol(in) = N-methyl-(R)-salsolinol(out). The catalysed reaction is acetylcholine(in) = acetylcholine(out). It carries out the reaction prostaglandin F2alpha(out) = prostaglandin F2alpha(in). It catalyses the reaction prostaglandin E2(out) = prostaglandin E2(in). With respect to regulation, tyrosine phosphorylation of the transporter leads to activation of the transport activity. Inhibited by cGMP, most likely through a cGMP-binding protein that interacts with OCT2. Its function is as follows. Electrogenic voltage-dependent transporter that mediates the transport of a variety of organic cations such as endogenous bioactive amines, cationic drugs and xenobiotics. Functions as a Na(+)-independent, bidirectional uniporter. Cation cellular uptake or release is driven by the electrochemical potential, i.e. membrane potential and concentration gradient. However, may also engage electroneutral cation exchange when saturating concentrations of cation substrates are reached. Predominantly expressed at the basolateral membrane of hepatocytes and proximal tubules and involved in the uptake and disposition of cationic compounds by hepatic and renal clearance from the blood flow. Implicated in monoamine neurotransmitters uptake such as histamine, dopamine, adrenaline/epinephrine, noradrenaline/norepinephrine, serotonin and tyramine, thereby supporting a physiological role in the central nervous system by regulating interstitial concentrations of neurotransmitters. Also capable of transporting dopaminergic neuromodulators cyclo(his-pro), salsolinol and N-methyl-salsolinol, thereby involved in the maintenance of dopaminergic cell integrity in the central nervous system. Mediates the bidirectional transport of acetylcholine (ACh) at the apical membrane of ciliated cell in airway epithelium, thereby playing a role in luminal release of ACh from bronchial epithelium. Also transports guanidine and endogenous monoamines such as vitamin B1/thiamine, creatinine and N-1-methylnicotinamide (NMN). Mediates the uptake and efflux of quaternary ammonium compound choline. Mediates the bidirectional transport of polyamine agmatine and the uptake of polyamines putrescine and spermidine. Able to transport non-amine endogenous compounds such as prostaglandin E2 (PGE2) and prostaglandin F2-alpha (PGF2-alpha). Also involved in the uptake of xenobiotic 4-(4-(dimethylamino)styryl)-N-methylpyridinium (ASP). May contribute to regulate the transport of organic compounds in testis across the blood-testis-barrier. The sequence is that of Solute carrier family 22 member 2 (SLC22A2) from Oryctolagus cuniculus (Rabbit).